A 257-amino-acid chain; its full sequence is Global transcriptional regulator CodY (257 aa).

Positions 1–155 (MSLLSKTREL…AATVIGMEIL (155 aa)) are GAF domain. The H-T-H motif DNA-binding region spans 203–222 (ASKVADGVGITRSVIVNALR).

The protein belongs to the CodY family.

It localises to the cytoplasm. Its function is as follows. DNA-binding global transcriptional regulator which is involved in the adaptive response to starvation and acts by directly or indirectly controlling the expression of numerous genes in response to nutrient availability. During rapid exponential growth, CodY is highly active and represses genes whose products allow adaptation to nutrient depletion. The protein is Global transcriptional regulator CodY of Staphylococcus aureus (strain bovine RF122 / ET3-1).